We begin with the raw amino-acid sequence, 3661 residues long: MSRRAPGSRLSSGGGGGGTKYPRSWNDWQPRTDSASADPDNLKYSSSRDRGGSSSYGLQPSNSAVVSRQRHDDTRVHADIQNDEKGGYSVNGGSGENTYGRKSLGQELRVNNVTSPEFTSVQHGSRALATKDMRKSQERSMSYSDESRLSNLLRRITREDDRDRRLATVKQLKEFIQQPENKLVLVKQLDNILAAVHDVLNESSKLLQELRQEGACCLGLLCASLSYEAEKIFKWIFSKFSSSAKDEVKLLYLCATYKALETVGEKKAFSSVMQLVMTSLQSILENVDTPELLCKCVKCILLVARCYPHIFSTNFRDTVDILVGWHIDHTQKPSLTQQVSGWLQSLEPFWVADLAFSTTLLGQFLEDMEAYAEDLSHVASGESVDEDVPPPSVSLPKLAALLRVFSTVVRSIGERFSPIRGPPITEAYVTDVLYRVMRCVTAANQVFFSEAVLTAANECVGVLLGSLDPSMTIHCDMVITYGLDQLENCQTCGTDYIISVLNLLTLIVEQINTKLPSSFVEKLFIPSSKLLFLRYHKEKEVVAVAHAVYQAVLSLKNIPVLETAYKLILGEMTCALNNLLHSLQLPEACSEIKHEAFKNHVFNVDNAKFVVIFDLSALTTIGNAKNSLIGMWALSPTVFALLSKNLMIVHSDLAVHFPAIQYAVLYTLYSHCTRHDHFISSSLSSSSPSLFDGAVISTVTTATKKHFSIILNLLGILLKKDNLNQDTRKLLMTWALEAAVLMKKSETYAPLFSLPSFHKFCKGLLANTLVEDVNICLQACSSLHALSSSLPDDLLQRCVDVCRVQLVHSGTRIRQAFGKLLKSIPLDVVLSNNNHTEIQEISLALRSHMSKAPSNTFHPQDFSDVISFILYGNSHRTGKDNWLERLFYSCQRLDKRDQSTIPRNLLKTDAVLWQWAIWEAAQFTVLSKLRTPLGRAQDTFQTIEGIIRSLAAHTLNPDQDVSQWTTADNDEGHGNNQLRLVLLLQYLENLEKLMYNAYEGCANALTSPPKVIRTFFYTNRQTCQDWLTRIRLSIMRVGLLAGQPAVTVRHGFDLLTEMKTTSLSQGNELEVTIMMVVEALCELHCPEAIQGIAVWSSSIVGKNLLWINSVAQQAEGRFEKASVEYQEHLCAMTGVDCCISSFDKSVLTLANAGRNSASPKHSLNGESRKTVLSKPTDSSPEVINYLGNKACECYISIADWAAVQEWQNAIHDLKKSTSSTSLNLKADFNYIKSLSSFESGKFVECTEQLELLPGENINLLAGGSKEKIDMKKLLPNMLSPDPRELQKSIEVQLLRSSVCLATALNPIEQDQKWQSITENVVKYLKQTSRIAIGPLRLSTLTVSQSLPVLSTLQLYCSSALENTVSNRLSTEDCLIPLFSEALRSCKQHDVRPWMQALRYTMYQNQLLEKIKEQTVPIRSHLMELGLTAAKFARKRGNVSLATRLLAQCSEVQLGKTTTAQDLVQHFKKLSTQGQVDEKWGPELDIEKTKLLYTAGQSTHAMEMLSSCAISFCKSVKAEYAVAKSILTLAKWIQAEWKEISGQLKQVYRAQHQQNFTGLSTLSKNILTLIELPSVNTMEEEYPRIESESTVHIGVGEPDFILGQLYHLSSVQAPEVAKSWAALASWAYRWGRKVVDNASQGEGVRLLPREKSEVQNLLPDTITEEEKERIYGILGQAVCRPAGIQDEDITLQITESEDNEEDDMVDVIWRQLISSCPWLSELDESATEGVIKVWRKVVDRIFSLYKLSCSAYFTFLKLNAGQIPLDEDDPRLHLSHRVEQSTDDMIVMATLRLLRLLVKHAGELRQYLEHGLETTPTAPWRGIIPQLFSRLNHPEVYVRQSICNLLCRVAQDSPHLILYPAIVGTISLSSESQASGNKFSTAIPTLLGNIQGEELLVSECEGGSPPASQDSNKDEPKSGLNEDQAMMQDCYSKIVDKLSSANPTMVLQVQMLVAELRRVTVLWDELWLGVLLQQHMYVLRRIQQLEDEVKRVQNNNTLRKEEKIAIMREKHTALMKPIVFALEHVRSITAAPAETPHEKWFQDNYGDAIENALEKLKTPLNPAKPGSSWIPFKEIMLSLQQRAQKRASYILRLEEISPWLAAMTNTEIALPGEVSARDTVTIHSVGGTITILPTKTKPKKLLFLGSDGKSYPYLFKGLEDLHLDERIMQFLSIVNTMFATINRQETPRFHARHYSVTPLGTRSGLIQWVDGATPLFGLYKRWQQREAALQAQKAQDSYQTPQNPGIVPRPSELYYSKIGPALKTVGLSLDVSRRDWPLHVMKAVLEELMEATPPNLLAKELWSSCTTPDEWWRVTQSYARSTAVMSMVGYIIGLGDRHLDNVLIDMTTGEVVHIDYNVCFEKGKSLRVPEKVPFRMTQNIETALGVTGVEGVFRLSCEQVLHIMRRGRETLLTLLEAFVYDPLVDWTAGGEAGFAGAVYGGGGQQAESKQSKREMEREITRSLFSSRVAEIKVNWFKNRDEMLVVLPKLDGSLDEYLSLQEQLTDVEKLQGKLLEEIEFLEGAEGVDHPSHTLQHRYSEHTQLQTQQRAVQEAIQVKLNEFEQWITHYQAAFNNLEATQLASLLQEISTQMDLGPPSYVPATAFLQNAGQAHLISQCEQLEGEVGALLQQRRSVLRGCLEQLHHYATVALQYPKAIFQKHRIEQWKTWMEELICNTTVERCQELYRKYEMQYAPQPPPTVCQFITATEMTLQRYAADINSRLIRQVERLKQEAVTVPVCEDQLKEIERCIKVFLHENGEEGSLSLASVIISALCTLTRRNLMMEGAASSAGEQLVDLTSRDGAWFLEELCSMSGNVTCLVQLLKQCHLVPQDLDIPNPMEASETVHLANGVYTSLQELNSNFRQIIFPEALRCLMKGEYTLESMLHELDGLIEQTTDGVPLQTLVESLQAYLRNAAMGLEEETHAHYIDVARLLHAQYGELIQPRNGSVDETPKMSAGQMLLVAFDGMFAQVETAFSLLVEKLNKMEIPIAWRKIDIIREARSTQVNFFDDDNHRQVLEEIFFLKRLQTIKEFFRLCGTFSKTLSGSSSLEDQNTVNGPVQIVNVKTLFRNSCFSEDQMAKPIKAFTADFVRQLLIGLPNQALGLTLCSFISALGVDIIAQVEAKDFGAESKVSVDDLCKKAVEHNIQIGKFSQLVMNRATVLASSYDTAWKKHDLVRRLETSISSCKTSLQRVQLHIAMFQWQHEDLLINRPQAMSVTPPPRSAILTSMKKKLHTLSQIETSIATVQEKLAALESSIEQRLKWAGGANPALAPVLQDFEATIAERRNLVLKESQRASQVTFLCSNIIHFESLRTRTAEALNLDAALFELIKRCQQMCSFASQFNSSVSELELRLLQRVDTGLEHPIGSSEWLLSAHKQLTQDMSTQRAIQTEKEQQIETVCETIQNLVDNIKTVLTGHNRQLGDVKHLLKAMAKDEEAALADGEDVPYENSVRQFLGEYKSWQDNIQTVLFTLVQAMGQVRSQEHVEMLQEITPTLKELKTQSQSIYNNLVSFASPLVTDATNECSSPTSSATYQPSFAAAVRSNTGQKTQPDVMSQNARKLIQKNLATSADTPPSTVPGTGKSVACSPKKAVRDPKTGKAVQERNSYAVSVWKRVKAKLEGRDVDPNRRMSVAEQVDYVIKEATNLDNLAQLYEGWTAWV.

The segment covering 1-11 (MSRRAPGSRLS) has biased composition (low complexity). Disordered regions lie at residues 1–101 (MSRR…TYGR) and 116–144 (PEFTSVQHGSRALATKDMRKSQERSMSYS). The interaction with SMG8 and SMG9 stretch occupies residues 1-1977 (MSRRAPGSRL…GVLLQQHMYV (1977 aa)). The segment covering 26–35 (NDWQPRTDSA) has biased composition (polar residues). 2 stretches are compositionally biased toward basic and acidic residues: residues 69–86 (QRHDDTRVHADIQNDEKG) and 129–138 (ATKDMRKSQE). At K173 the chain carries N6-acetyllysine. A compositionally biased stretch (polar residues) spans 1154–1165 (RNSASPKHSLNG). Positions 1154–1175 (RNSASPKHSLNGESRKTVLSKP) are disordered. One can recognise an FAT domain in the interval 1283 to 1866 (RELQKSIEVQ…LYPAIVGTIS (584 aa)). One copy of the HEAT repeat lies at 1817-1852 (APWRGIIPQLFSRLNHPEVYVRQSICNLLCRVAQDS). A disordered region spans residues 1898-1919 (ECEGGSPPASQDSNKDEPKSGL). Residues 2124–2463 (VGGTITILPT…MEREITRSLF (340 aa)) enclose the PI3K/PI4K catalytic domain. A G-loop region spans residues 2130–2136 (ILPTKTK). Residues 2332–2340 (GLGDRHLDN) form a catalytic loop region. The activation loop stretch occupies residues 2352-2376 (HIDYNVCFEKGKSLRVPEKVPFRMT). T3550 carries the phosphothreonine modification. Phosphoserine occurs at positions 3556 and 3570. Residues 3568–3579 (ATSADTPPSTVP) are compositionally biased toward polar residues. The interval 3568-3591 (ATSADTPPSTVPGTGKSVACSPKK) is disordered. Residues T3573 and T3577 each carry the phosphothreonine modification. The 33-residue stretch at 3629-3661 (RRMSVAEQVDYVIKEATNLDNLAQLYEGWTAWV) folds into the FATC domain.

It belongs to the PI3/PI4-kinase family. In terms of assembly, component of the SMG1C complex composed of SMG1, SMG8 and SMG9; the recruitment of SMG8 to SMG1 N-terminus induces a large conformational change in the SMG1 C-terminal head domain containing the catalytic domain. Component of the transient SURF (SMG1-UPF1-eRF1-eRF3) complex. Part of a complex composed of SMG1, DHX34 and UPF1; within the complex DHX34 acts as a scaffolding protein to facilitate SMG1 phosphorylation of UPF1. Interacts with PRKCI. Interacts with TELO2 and TTI1. Interacts with RUVBL1 and RUVBL2. Interacts with UPF2. Interacts with DHX34 (via C-terminus); the interaction is RNA-independent. Requires Mn(2+) as cofactor. Autophosphorylated. In terms of tissue distribution, widely expressed, with highest level in heart and skeletal muscle. Expressed in placenta, brain, lung and spleen, but not in liver.

Its subcellular location is the nucleus. It localises to the cytoplasm. The catalysed reaction is L-seryl-[protein] + ATP = O-phospho-L-seryl-[protein] + ADP + H(+). It carries out the reaction L-threonyl-[protein] + ATP = O-phospho-L-threonyl-[protein] + ADP + H(+). Inhibited by caffeine, LY294002 and wortmannin. Serine/threonine protein kinase involved in both mRNA surveillance and genotoxic stress response pathways. Recognizes the substrate consensus sequence [ST]-Q. Plays a central role in nonsense-mediated decay (NMD) of mRNAs containing premature stop codons by phosphorylating UPF1/RENT1. Recruited by release factors to stalled ribosomes together with SMG8 and SMG9 (forming the SMG1C protein kinase complex), and UPF1 to form the transient SURF (SMG1-UPF1-eRF1-eRF3) complex. In EJC-dependent NMD, the SURF complex associates with the exon junction complex (EJC) through UPF2 and allows the formation of an UPF1-UPF2-UPF3 surveillance complex which is believed to activate NMD. Also acts as a genotoxic stress-activated protein kinase that displays some functional overlap with ATM. Can phosphorylate p53/TP53 and is required for optimal p53/TP53 activation after cellular exposure to genotoxic stress. Its depletion leads to spontaneous DNA damage and increased sensitivity to ionizing radiation (IR). May activate PRKCI but not PRKCZ. The polypeptide is Serine/threonine-protein kinase SMG1 (Homo sapiens (Human)).